Consider the following 177-residue polypeptide: Large ribosomal subunit protein uL6 (177 aa).

The protein belongs to the universal ribosomal protein uL6 family. In terms of assembly, part of the 50S ribosomal subunit.

Its function is as follows. This protein binds to the 23S rRNA, and is important in its secondary structure. It is located near the subunit interface in the base of the L7/L12 stalk, and near the tRNA binding site of the peptidyltransferase center. In Micrococcus luteus (strain ATCC 4698 / DSM 20030 / JCM 1464 / CCM 169 / CCUG 5858 / IAM 1056 / NBRC 3333 / NCIMB 9278 / NCTC 2665 / VKM Ac-2230) (Micrococcus lysodeikticus), this protein is Large ribosomal subunit protein uL6.